A 488-amino-acid polypeptide reads, in one-letter code: E3 ubiquitin-protein ligase RNF8 (488 aa).

One can recognise an FHA domain in the interval 38-92 (VTIGRGLSVTYQLISKVCPLMISRSHCVLKQNPEGQWTIMDNKSLNGVWLNRERL). Residues 68 to 72 (QNPEG) are required for interaction with PIWIL1. Residues 141-164 (DQRMEKHKGSRTKRKFSSPGLENL) form a disordered region. The segment covering 145–156 (EKHKGSRTKRKF) has biased composition (basic residues). Ser157 is subject to Phosphoserine. Residues 406–444 (CIICSEYFIEAVTLNCAHSFCSFCINEWMKRKVECPICR) form an RING-type zinc finger.

Belongs to the RNF8 family. As to quaternary structure, homodimer. Forms a E2-E3 ubiquitin ligase complex composed of the RNF8 homodimer and a E2 heterodimer of UBE2N and UBE2V2. Interacts with class III E2s, including UBE2E1, UBE2E2, and UBE2E3 and with UBE2N. Interacts with RXRA. Interacts (via FHA domain) with ATM-phosphorylated MDC1. Interacts (via FHA domain) with 'Thr-4829' phosphorylated HERC2 (via C-terminus). Interacts with PIWIL1; leading to sequester RNF8 in the cytoplasm. Interacts with WRAP53/TCAB1. In terms of assembly, (Microbial infection) May interact with the L.monocytogenes protein actA; however, given these errors in the sequence (AJ242721), the relevance of the interaction with actA remains to be confirmed. Autoubiquitinated through 'Lys-48' and 'Lys-63' of ubiquitin. 'Lys-63' polyubiquitination is mediated by UBE2N. 'Lys-29'-type polyubiquitination is also observed, but it doesn't require its own functional RING-type zinc finger.

The protein resides in the nucleus. It is found in the cytoplasm. It localises to the midbody. Its subcellular location is the chromosome. The protein localises to the telomere. It carries out the reaction S-ubiquitinyl-[E2 ubiquitin-conjugating enzyme]-L-cysteine + [acceptor protein]-L-lysine = [E2 ubiquitin-conjugating enzyme]-L-cysteine + N(6)-ubiquitinyl-[acceptor protein]-L-lysine.. It participates in protein modification; protein ubiquitination. E3 ubiquitin-protein ligase that plays a key role in DNA damage signaling via 2 distinct roles: by mediating the 'Lys-63'-linked ubiquitination of histones H2A and H2AX and promoting the recruitment of DNA repair proteins at double-strand breaks (DSBs) sites, and by catalyzing 'Lys-48'-linked ubiquitination to remove target proteins from DNA damage sites. Following DNA DSBs, it is recruited to the sites of damage by ATM-phosphorylated MDC1 and catalyzes the 'Lys-63'-linked ubiquitination of histones H2A and H2AX, thereby promoting the formation of TP53BP1 and BRCA1 ionizing radiation-induced foci (IRIF). Also controls the recruitment of UIMC1-BRCC3 (RAP80-BRCC36) and PAXIP1/PTIP to DNA damage sites. Promotes the recruitment of NBN to DNA damage sites by catalyzing 'Lys-6'-linked ubiquitination of NBN. Also recruited at DNA interstrand cross-links (ICLs) sites and catalyzes 'Lys-63'-linked ubiquitination of histones H2A and H2AX, leading to recruitment of FAAP20 and Fanconi anemia (FA) complex, followed by interstrand cross-link repair. H2A ubiquitination also mediates the ATM-dependent transcriptional silencing at regions flanking DSBs in cis, a mechanism to avoid collision between transcription and repair intermediates. Promotes the formation of 'Lys-63'-linked polyubiquitin chains via interactions with the specific ubiquitin-conjugating UBE2N/UBC13 and ubiquitinates non-histone substrates such as PCNA. Substrates that are polyubiquitinated at 'Lys-63' are usually not targeted for degradation. Also catalyzes the formation of 'Lys-48'-linked polyubiquitin chains via interaction with the ubiquitin-conjugating UBE2L6/UBCH8, leading to degradation of substrate proteins such as CHEK2, JMJD2A/KDM4A and KU80/XRCC5: it is still unclear how the preference toward 'Lys-48'- versus 'Lys-63'-linked ubiquitination is regulated but it could be due to RNF8 ability to interact with specific E2 specific ligases. For instance, interaction with phosphorylated HERC2 promotes the association between RNF8 and UBE2N/UBC13 and favors the specific formation of 'Lys-63'-linked ubiquitin chains. Promotes non-homologous end joining (NHEJ) by promoting the 'Lys-48'-linked ubiquitination and degradation the of KU80/XRCC5. Following DNA damage, mediates the ubiquitination and degradation of JMJD2A/KDM4A in collaboration with RNF168, leading to unmask H4K20me2 mark and promote the recruitment of TP53BP1 at DNA damage sites. Following DNA damage, mediates the ubiquitination and degradation of POLD4/p12, a subunit of DNA polymerase delta. In the absence of POLD4, DNA polymerase delta complex exhibits higher proofreading activity. In addition to its function in damage signaling, also plays a role in higher-order chromatin structure by mediating extensive chromatin decondensation. Involved in the activation of ATM by promoting histone H2B ubiquitination, which indirectly triggers histone H4 'Lys-16' acetylation (H4K16ac), establishing a chromatin environment that promotes efficient activation of ATM kinase. Required in the testis, where it plays a role in the replacement of histones during spermatogenesis. At uncapped telomeres, promotes the joining of deprotected chromosome ends by inducing H2A ubiquitination and TP53BP1 recruitment, suggesting that it may enhance cancer development by aggravating telomere-induced genome instability in case of telomeric crisis. Promotes the assembly of RAD51 at DNA DSBs in the absence of BRCA1 and TP53BP1 Also involved in class switch recombination in immune system, via its role in regulation of DSBs repair. May be required for proper exit from mitosis after spindle checkpoint activation and may regulate cytokinesis. May play a role in the regulation of RXRA-mediated transcriptional activity. Not involved in RXRA ubiquitination by UBE2E2. The protein is E3 ubiquitin-protein ligase RNF8 of Mus musculus (Mouse).